Reading from the N-terminus, the 397-residue chain is Carnitine transport ATP-binding protein OpuCA (397 aa).

Residues 2–236 form the ABC transporter domain; sequence LKFEHVTKTY…PANSFVEDFI (235 aa). 35 to 42 lines the ATP pocket; the sequence is GPSGCGKT. 2 CBS domains span residues 255–311 and 315–373; these read MNTN…ATSV and IEKN…WGTL. The interval 377 to 397 is disordered; it reads TENQEEQADSKTTEPEMKQEG. Residues 384 to 397 are compositionally biased toward basic and acidic residues; sequence ADSKTTEPEMKQEG.

Belongs to the ABC transporter superfamily. In terms of assembly, the complex is composed of two ATP-binding proteins (OpuCA), two transmembrane proteins (OpuCB and OpuCD) and a solute-binding protein (OpuCC).

It carries out the reaction a quaternary ammonium(out) + ATP + H2O = a quaternary ammonium(in) + ADP + phosphate + H(+). Part of the ABC transporter complex OpuCABCD involved in carnitine uptake. Probably responsible for energy coupling to the transport system. Involved, with BetL and GbuABC, in osmoprotection and cryoprotection of Listeria. Can also mediate weak glycine betaine transport. The sequence is that of Carnitine transport ATP-binding protein OpuCA (opuCA) from Listeria monocytogenes serotype 1/2a (strain 10403S).